Consider the following 256-residue polypeptide: tRNA (guanine-N(7)-)-methyltransferase (256 aa).

The span at 1 to 11 (MHPQDASTEQT) shows a compositional bias: polar residues. Positions 1 to 35 (MHPQDASTEQTPVDDDQVESSQPVHAPEDVAHPRR) are disordered. Residues Glu-85, Glu-110, Asp-137, and Asp-160 each coordinate S-adenosyl-L-methionine. Asp-160 is a catalytic residue. A substrate-binding site is contributed by Lys-164. The segment at 166-171 (RHNKRR) is interaction with RNA. Residues Asp-196 and 234–237 (TKFE) each bind substrate.

Belongs to the class I-like SAM-binding methyltransferase superfamily. TrmB family.

It catalyses the reaction guanosine(46) in tRNA + S-adenosyl-L-methionine = N(7)-methylguanosine(46) in tRNA + S-adenosyl-L-homocysteine. It participates in tRNA modification; N(7)-methylguanine-tRNA biosynthesis. Its function is as follows. Catalyzes the formation of N(7)-methylguanine at position 46 (m7G46) in tRNA. In Cupriavidus pinatubonensis (strain JMP 134 / LMG 1197) (Cupriavidus necator (strain JMP 134)), this protein is tRNA (guanine-N(7)-)-methyltransferase.